The chain runs to 115 residues: U3-lycotoxin-Ls1a (115 aa).

The N-terminal stretch at 1-20 is a signal peptide; the sequence is MKFVLLFGVFLVTLFSYSSA. Residues 21–44 constitute a propeptide that is removed on maturation; that stretch reads EMLDDFDQADEDELLSLIEKEEAR. Cystine bridges form between C48/C63, C55/C72, C62/C87, and C74/C85.

Belongs to the neurotoxin 19 (CSTX) family. 01 subfamily. Expressed by the venom gland.

It is found in the secreted. This chain is U3-lycotoxin-Ls1a, found in Lycosa singoriensis (Wolf spider).